Here is a 316-residue protein sequence, read N- to C-terminus: Ribosomal RNA small subunit methyltransferase H (316 aa).

S-adenosyl-L-methionine-binding positions include 35–37 (GGH), Asp-55, Phe-79, Asp-101, and Gln-108.

It belongs to the methyltransferase superfamily. RsmH family.

It is found in the cytoplasm. The catalysed reaction is cytidine(1402) in 16S rRNA + S-adenosyl-L-methionine = N(4)-methylcytidine(1402) in 16S rRNA + S-adenosyl-L-homocysteine + H(+). Its function is as follows. Specifically methylates the N4 position of cytidine in position 1402 (C1402) of 16S rRNA. The sequence is that of Ribosomal RNA small subunit methyltransferase H from Vibrio vulnificus (strain CMCP6).